The primary structure comprises 279 residues: Ribosomal RNA small subunit methyltransferase J (279 aa).

Residues 138 to 139 and aspartate 194 each bind S-adenosyl-L-methionine; that span reads ER.

This sequence belongs to the methyltransferase superfamily. RsmJ family.

It localises to the cytoplasm. It catalyses the reaction guanosine(1516) in 16S rRNA + S-adenosyl-L-methionine = N(2)-methylguanosine(1516) in 16S rRNA + S-adenosyl-L-homocysteine + H(+). Its function is as follows. Specifically methylates the guanosine in position 1516 of 16S rRNA. The polypeptide is Ribosomal RNA small subunit methyltransferase J (Acinetobacter baumannii (strain ATCC 17978 / DSM 105126 / CIP 53.77 / LMG 1025 / NCDC KC755 / 5377)).